Here is a 149-residue protein sequence, read N- to C-terminus: 2S seed storage albumin protein (149 aa).

The signal sequence occupies residues 1-22 (MKLFIILATATLLIAATQAKYL). Cystine bridges form between cysteine 38-cysteine 98, cysteine 52-cysteine 87, cysteine 88-cysteine 133, and cysteine 100-cysteine 140. 4 no IgE-binding regions span residues 41–53 (QVKM…VKCN), 68–81 (ALSR…ESEE), 84–95 (LRGCCVAMKEME), and 97–105 (ECVCEWMKM). Positions 108–117 (ENQKGRIGET) are igE-binding. The tract at residues 121-131 (KGIRDLKELPN) is no IgE-binding. The interval 132-141 (KCGISEMECH) is igE-binding.

This sequence belongs to the 2S seed storage albumins family. As to expression, expressed in seeds (at protein level). Expressed in seeds.

Its function is as follows. Seed storage protein. The protein is 2S seed storage albumin protein of Fagopyrum tataricum (Tartarian buckwheat).